Consider the following 650-residue polypeptide: Zinc finger CCCH domain-containing protein 55 (650 aa).

The interval 67-162 (NSPSSTPTSP…THSGSADAAG (96 aa)) is disordered. Residues 105–128 (SPSSPSSTSPWSFNNCINGNNGNN) show a composition bias toward low complexity. A compositionally biased stretch (polar residues) spans 141–154 (PFSSHQSNGLSATH). A C3H1-type zinc finger spans residues 232–254 (PCVYFSRGLCKNGESCKFIHGGY). Residues 357-433 (RQIYLTFPAD…RVLVKPYKEK (77 aa)) form the RRM domain. The segment at 566 to 650 (PVVNPMSVNN…PPVTTNNLMQ (85 aa)) is disordered. The span at 581–590 (AKEETNKSEL) shows a compositional bias: basic and acidic residues.

This is Zinc finger CCCH domain-containing protein 55 from Arabidopsis thaliana (Mouse-ear cress).